The following is a 330-amino-acid chain: MKAVKAPVEEMDQAECEVKEEKSASGPCFPPTFSVSEIKNKQRRHTMFLKLKEEKRKKRMELKKKKKKERKALDDKAPPKEVPKTIENQRIYDETTVNPEDEEVAFDEGTDEFSAYFNRLTNPKVLITTSDRPRGRTVRFCDQLATVIPHAYVYYRRGLALKKVIPQCISRGFTYLMVINEDRKVPNGMVLCHLPDGPTAHFKVSSVRLRKEMKRRGKNPTEHSPEVILNNFTTRLGHSIGRLFAALFPHDPQFVGRQVATFHNQRDFIFFRFHRYIFKNEKKVGIQELGPRFTLKLRSLQKGTFDSKFGEYEWVHKRHEMDSSRRKFHL.

Disordered stretches follow at residues 1–32 (MKAVKAPVEEMDQAECEVKEEKSASGPCFPPT) and 53–83 (EEKRKKRMELKKKKKKERKALDDKAPPKEVP). Residues 55 to 70 (KRKKRMELKKKKKKER) show a composition bias toward basic residues. Positions 71–83 (KALDDKAPPKEVP) are enriched in basic and acidic residues. A Brix domain is found at 123-306 (PKVLITTSDR…LRSLQKGTFD (184 aa)). Positions 284 to 301 (VGIQELGPRFTLKLRSLQ) are RNA-binding.

The protein localises to the nucleus. It is found in the nucleolus. Its function is as follows. May be required for ribosome biogenesis. The sequence is that of Ribosome production factor 1 (rpf1) from Danio rerio (Zebrafish).